The chain runs to 593 residues: Bifunctional purine biosynthesis protein ATIC (593 aa).

Residues Met-1–Cys-147 enclose the MGS-like domain. The segment at Met-1–Ser-199 is IMP cyclohydrolase. IMP contacts are provided by residues Ser-13–Lys-15, Ser-35–Thr-38, Arg-65–Thr-68, Cys-102–Asn-103, and Asp-126–Ile-127. Lys-138 functions as the Proton donor/acceptor; for FAICAR cyclization activity in the catalytic mechanism. Lys-200 carries the N6-acetyllysine modification. Residues Lys-200 to His-593 are AICAR formyltransferase. Residues Arg-208–Tyr-209, His-268, Gly-317, Asp-340, Asn-432, and Arg-452 each bind 5-amino-1-(5-phospho-beta-D-ribosyl)imidazole-4-carboxamide. The active-site Proton acceptor; for AICAR formyltransferase activity is the His-268. Residue Ile-453 coordinates (6R)-10-formyltetrahydrofolate. Phe-542 contacts 5-amino-1-(5-phospho-beta-D-ribosyl)imidazole-4-carboxamide. (6R)-10-formyltetrahydrofolate-binding positions include Asp-547 and Ser-566–Ala-567. A 5-amino-1-(5-phospho-beta-D-ribosyl)imidazole-4-carboxamide-binding site is contributed by Arg-589.

Belongs to the PurH family. As to quaternary structure, homodimer. Associates with internalized INSR complexes on Golgi/endosomal membranes. Interacts with INSR; ATIC together with PRKAA2/AMPK2 and HACD3/PTPLAD1 is proposed to be part of a signaling network regulating INSR autophosphorylation and endocytosis.

It is found in the cytoplasm. The protein resides in the cytosol. It carries out the reaction (6R)-10-formyltetrahydrofolate + 5-amino-1-(5-phospho-beta-D-ribosyl)imidazole-4-carboxamide = 5-formamido-1-(5-phospho-D-ribosyl)imidazole-4-carboxamide + (6S)-5,6,7,8-tetrahydrofolate. The enzyme catalyses 10-formyldihydrofolate + 5-amino-1-(5-phospho-beta-D-ribosyl)imidazole-4-carboxamide = 5-formamido-1-(5-phospho-D-ribosyl)imidazole-4-carboxamide + 7,8-dihydrofolate. The catalysed reaction is IMP + H2O = 5-formamido-1-(5-phospho-D-ribosyl)imidazole-4-carboxamide. Its pathway is purine metabolism; IMP biosynthesis via de novo pathway; 5-formamido-1-(5-phospho-D-ribosyl)imidazole-4-carboxamide from 5-amino-1-(5-phospho-D-ribosyl)imidazole-4-carboxamide (10-formyl THF route): step 1/1. It functions in the pathway purine metabolism; IMP biosynthesis via de novo pathway; IMP from 5-formamido-1-(5-phospho-D-ribosyl)imidazole-4-carboxamide: step 1/1. AMP and XMP inhibit AICAR formyltransferase activity. AICAR formyltransferase activity is competitively inhibited by 2-[5-hydroxy-3-methyl-1-(2-methyl-4-sulfo-phenyl)-1H-pyrazol-4-ylazo]-4-sulfo-benzoic acid (326203-A). FAICAR cyclization is competitively inhibited by 1,5-dihydroimidazo[4,5-c][1,2,6]thiadiazin-4(3H)-one-2,2-dioxide and the corresponding nucleoside and nucleoside monophosphate. Its function is as follows. Bifunctional enzyme that catalyzes the last two steps of purine biosynthesis. Acts as a transformylase that incorporates a formyl group to the AMP analog AICAR (5-amino-1-(5-phospho-beta-D-ribosyl)imidazole-4-carboxamide) to produce the intermediate formyl-AICAR (FAICAR). Can use both 10-formyldihydrofolate and 10-formyltetrahydrofolate as the formyl donor in this reaction. Also catalyzes the cyclization of FAICAR to inosine monophosphate (IMP). Promotes insulin receptor/INSR autophosphorylation and is involved in INSR internalization. This is Bifunctional purine biosynthesis protein ATIC (ATIC) from Gallus gallus (Chicken).